The sequence spans 365 residues: MGSTGETQMTPTQVSDEEAHLFAMQLASASVLPMILKTAIELDLLEIMAKAGPGAFLSTSEIASHLPTKNPDAPVMLDRILRLLASYSILTCSLKDLPDGKVERLYGLAPVCKFLTKNEDGVSVSPLCLMNQDKVLMESWYYLKDAILDGGIPFNKAYGMTAFEYHGTDPRFNKVFNKGMSDHSTITMKKILETYKGFEGLTSLVDVGGGTGAVVNTIVSKYPSIKGINFDLPHVIEDAPSYPGVEHVGGDMFVSVPKADAVFMKWICHDWSDAHCLKFLKNCYDALPENGKVILVECILPVAPDTSLATKGVVHVDVIMLAHNPGGKERTEKEFEGLAKGAGFQGFEVMCCAFNTHVIEFRKKA.

Residue 130 to 136 (MNQDKVL) coordinates substrate. Residues 162–180 (AFEYHGTDPRFNKVFNKGM) form a substrate binding region. G208, D231, D251, M252, and K265 together coordinate S-adenosyl-L-methionine. H269 functions as the Proton acceptor in the catalytic mechanism.

The protein belongs to the class I-like SAM-binding methyltransferase superfamily. Cation-independent O-methyltransferase family. COMT subfamily. Homodimer. Post-translationally, the N-terminus is blocked. As to expression, xylem.

The catalysed reaction is (E)-caffeate + S-adenosyl-L-methionine = (E)-ferulate + S-adenosyl-L-homocysteine + H(+). It functions in the pathway aromatic compound metabolism; phenylpropanoid biosynthesis. Its function is as follows. Catalyzes the conversion of caffeic acid to ferulic acid and of 5-hydroxyferulic acid to sinapic acid. The resulting products may subsequently be converted to the corresponding alcohols that are incorporated into lignins. The chain is Caffeic acid 3-O-methyltransferase 1 (OMT1) from Populus tremuloides (Quaking aspen).